A 282-amino-acid chain; its full sequence is 4-diphosphocytidyl-2-C-methyl-D-erythritol kinase (282 aa).

The active site involves Lys-12. 95–105 is a binding site for ATP; sequence PMGGGIGGGSS. Asp-137 is an active-site residue.

The protein belongs to the GHMP kinase family. IspE subfamily.

It catalyses the reaction 4-CDP-2-C-methyl-D-erythritol + ATP = 4-CDP-2-C-methyl-D-erythritol 2-phosphate + ADP + H(+). It functions in the pathway isoprenoid biosynthesis; isopentenyl diphosphate biosynthesis via DXP pathway; isopentenyl diphosphate from 1-deoxy-D-xylulose 5-phosphate: step 3/6. Catalyzes the phosphorylation of the position 2 hydroxy group of 4-diphosphocytidyl-2C-methyl-D-erythritol. This Pseudomonas aeruginosa (strain UCBPP-PA14) protein is 4-diphosphocytidyl-2-C-methyl-D-erythritol kinase.